Here is a 147-residue protein sequence, read N- to C-terminus: Large ribosomal subunit protein uL15 (147 aa).

The segment at 20-54 is disordered; that stretch reads GRGIGSGKGKTSGKGHKGQKARGTGKVHPWFEGGQ. Over residues 30-44 the composition is skewed to basic residues; the sequence is TSGKGHKGQKARGTG.

Belongs to the universal ribosomal protein uL15 family. Part of the 50S ribosomal subunit.

In terms of biological role, binds to the 23S rRNA. This Thermosipho africanus (strain TCF52B) protein is Large ribosomal subunit protein uL15.